Reading from the N-terminus, the 266-residue chain is Ras-like protein family member 12 (266 aa).

Residues 27–34, 74–78, and 134–137 each bind GTP; these read GRRGAGKS, DTADL, and NKLD.

It belongs to the small GTPase superfamily. Ras family.

It catalyses the reaction GTP + H2O = GDP + phosphate + H(+). This Bos taurus (Bovine) protein is Ras-like protein family member 12 (RASL12).